The chain runs to 438 residues: Glutamine synthetase (438 aa).

The GS beta-grasp domain occupies Glu14 to Thr98. The region spanning Pro106–Gln438 is the GS catalytic domain. Mg(2+) is bound by residues Glu130 and Glu132. Asp208 lines the ATP pocket. Mg(2+)-binding residues include Glu213 and Glu220. L-glutamate-binding positions include Asn264–Gly265 and Gly265. His269 provides a ligand contact to Mg(2+). ATP contacts are provided by residues Asn271–Ser273 and Ser273. Residues Arg321, Glu327, and Arg339 each coordinate L-glutamate. Arg339, Arg344, and Lys352 together coordinate ATP. Glu357 is a binding site for Mg(2+). Arg359 contributes to the L-glutamate binding site. Tyr397 carries the post-translational modification O-AMP-tyrosine.

Belongs to the glutamine synthetase family. As to quaternary structure, oligomer of 12 subunits arranged in the form of two hexameric ring. The cofactor is Mg(2+).

Its subcellular location is the cytoplasm. It catalyses the reaction L-glutamate + NH4(+) + ATP = L-glutamine + ADP + phosphate + H(+). With respect to regulation, the activity of this enzyme could be controlled by adenylation under conditions of abundant glutamine. Functionally, catalyzes the ATP-dependent biosynthesis of glutamine from glutamate and ammonia. This chain is Glutamine synthetase, found in Rhodobacter capsulatus (Rhodopseudomonas capsulata).